Reading from the N-terminus, the 461-residue chain is Dihydrofolate reductase (461 aa).

In terms of domain architecture, DHFR spans 233 to 447 (DLTMIVAVSS…VEIEFELYGK (215 aa)). NADP(+) contacts are provided by residues Ala239 and 246–252 (GIGKKNS). 260–265 (EMAYFA) provides a ligand contact to substrate. Residue 292–294 (RSC) coordinates NADP(+). Arg308 contacts substrate. NADP(+) contacts are provided by residues 314-316 (TRN) and 365-372 (GGSFLYGS).

The protein belongs to the dihydrofolate reductase family.

It carries out the reaction (6S)-5,6,7,8-tetrahydrofolate + NADP(+) = 7,8-dihydrofolate + NADPH + H(+). Its pathway is cofactor biosynthesis; tetrahydrofolate biosynthesis; 5,6,7,8-tetrahydrofolate from 7,8-dihydrofolate: step 1/1. Its function is as follows. Key enzyme in folate metabolism. Catalyzes an essential reaction for de novo glycine and purine synthesis, and for DNA precursor synthesis. The sequence is that of Dihydrofolate reductase (dfr1) from Schizosaccharomyces pombe (strain 972 / ATCC 24843) (Fission yeast).